The following is a 130-amino-acid chain: Ribosome-binding factor A (130 aa).

Belongs to the RbfA family. Monomer. Binds 30S ribosomal subunits, but not 50S ribosomal subunits or 70S ribosomes.

It localises to the cytoplasm. In terms of biological role, one of several proteins that assist in the late maturation steps of the functional core of the 30S ribosomal subunit. Associates with free 30S ribosomal subunits (but not with 30S subunits that are part of 70S ribosomes or polysomes). Required for efficient processing of 16S rRNA. May interact with the 5'-terminal helix region of 16S rRNA. The polypeptide is Ribosome-binding factor A (Prochlorococcus marinus (strain AS9601)).